The chain runs to 331 residues: Ribosomal RNA small subunit methyltransferase C (331 aa).

The protein belongs to the methyltransferase superfamily. RsmC family. Monomer.

It is found in the cytoplasm. The catalysed reaction is guanosine(1207) in 16S rRNA + S-adenosyl-L-methionine = N(2)-methylguanosine(1207) in 16S rRNA + S-adenosyl-L-homocysteine + H(+). Functionally, specifically methylates the guanine in position 1207 of 16S rRNA in the 30S particle. The protein is Ribosomal RNA small subunit methyltransferase C of Ectopseudomonas mendocina (strain ymp) (Pseudomonas mendocina).